A 187-amino-acid chain; its full sequence is Probable chemoreceptor glutamine deamidase CheD (187 aa).

The segment at 164 to 187 is disordered; the sequence is APQDVRRPTPPPMPAVASGDVDLF.

It belongs to the CheD family.

It carries out the reaction L-glutaminyl-[protein] + H2O = L-glutamyl-[protein] + NH4(+). Functionally, probably deamidates glutamine residues to glutamate on methyl-accepting chemotaxis receptors (MCPs), playing an important role in chemotaxis. The chain is Probable chemoreceptor glutamine deamidase CheD from Caulobacter vibrioides (strain ATCC 19089 / CIP 103742 / CB 15) (Caulobacter crescentus).